A 318-amino-acid polypeptide reads, in one-letter code: Pantothenate kinase (318 aa).

Residue 96-103 coordinates ATP; it reads GSVSVGKS.

This sequence belongs to the prokaryotic pantothenate kinase family.

The protein resides in the cytoplasm. The enzyme catalyses (R)-pantothenate + ATP = (R)-4'-phosphopantothenate + ADP + H(+). The protein operates within cofactor biosynthesis; coenzyme A biosynthesis; CoA from (R)-pantothenate: step 1/5. The sequence is that of Pantothenate kinase from Bradyrhizobium sp. (strain BTAi1 / ATCC BAA-1182).